A 148-amino-acid chain; its full sequence is Large ribosomal subunit protein bL9 (148 aa).

This sequence belongs to the bacterial ribosomal protein bL9 family.

Binds to the 23S rRNA. This chain is Large ribosomal subunit protein bL9, found in Frankia alni (strain DSM 45986 / CECT 9034 / ACN14a).